A 271-amino-acid polypeptide reads, in one-letter code: Protein ABHD14A (271 aa).

A helical; Signal-anchor for type II membrane protein transmembrane segment spans residues 35 to 55 (VALLGLSLLLMLLLYVGLPGP). An N-linked (GlcNAc...) asparagine glycan is attached at Asn-67. Residue Ser-171 is the Charge relay system of the active site. Asn-201 carries an N-linked (GlcNAc...) asparagine glycan. Residues Asp-222 and His-249 each act as charge relay system in the active site.

Belongs to the AB hydrolase superfamily. ABHD14 family.

The protein localises to the cytoplasm. It localises to the membrane. Its function is as follows. Possible role in granule neuron development. The chain is Protein ABHD14A from Homo sapiens (Human).